Consider the following 244-residue polypeptide: Venom nerve growth factor 2 (244 aa).

The N-terminal stretch at M1–A18 is a signal peptide. Residues A19–R125 constitute a propeptide that is removed on maturation. Positions G47–D66 are enriched in basic and acidic residues. Positions G47–Q67 are disordered. Cystine bridges form between C139-C205, C181-C233, and C193-C235.

It belongs to the NGF-beta family. As to quaternary structure, homodimer; non-covalently linked. In terms of tissue distribution, expressed by the venom gland.

It localises to the secreted. Nerve growth factor is important for the development and maintenance of the sympathetic and sensory nervous systems. It stimulates division and differentiation of sympathetic and embryonic sensory neurons as well as basal forebrain cholinergic neurons in the brain. Its relevance in the snake venom is not clear. However, it has been shown to inhibit metalloproteinase-dependent proteolysis of platelet glycoprotein Ib alpha, suggesting a metalloproteinase inhibition to prevent metalloprotease autodigestion and/or protection against prey proteases. Binds a lipid between the two protein chains in the homodimer. The lipid-bound form promotes histamine relase from mouse mast cells, contrary to the lipid-free form. The protein is Venom nerve growth factor 2 of Tropidechis carinatus (Australian rough-scaled snake).